Consider the following 199-residue polypeptide: Chromophore lyase CpcT/CpeT 2 (199 aa).

It belongs to the CpcT/CpeT biliprotein lyase family.

Its function is as follows. Covalently attaches a chromophore to Cys residue(s) of phycobiliproteins. The sequence is that of Chromophore lyase CpcT/CpeT 2 from Synechococcus sp. (strain JA-3-3Ab) (Cyanobacteria bacterium Yellowstone A-Prime).